Reading from the N-terminus, the 459-residue chain is Endoglucanase EG-1 (459 aa).

The signal sequence occupies residues 1–22 (MAPSVTLPLTTAILAIARLVAA). A Pyrrolidone carboxylic acid modification is found at glutamine 23. Positions 23-397 (QQPGTSTPEV…DIGSTTNSTA (375 aa)) are catalytic. 8 disulfide bridges follow: cysteine 41–cysteine 47, cysteine 71–cysteine 92, cysteine 82–cysteine 88, cysteine 161–cysteine 360, cysteine 193–cysteine 216, cysteine 197–cysteine 215, cysteine 236–cysteine 241, and cysteine 246–cysteine 315. Asparagine 78 carries an N-linked (GlcNAc) asparagine glycan. An N-linked (GlcNAc...) (high mannose) asparagine glycan is attached at asparagine 204. Glutamate 218 functions as the Nucleophile in the catalytic mechanism. The active-site Proton donor/acceptor is the glutamate 223. Positions 390 to 425 (GSTTNSTAPPPPPASSTTFSTTRRSSTTSSSPSCTQ) are disordered. Asparagine 394 carries an N-linked (GlcNAc...) asparagine glycan. A linker region spans residues 398–423 (PPPPPASSTTFSTTRRSSTTSSSPSC). Positions 404 to 425 (SSTTFSTTRRSSTTSSSPSCTQ) are enriched in low complexity. 3 disulfide bridges follow: cysteine 423-cysteine 439, cysteine 431-cysteine 448, and cysteine 442-cysteine 458. One can recognise a CBM1 domain in the interval 423-459 (CTQTHWGQCGGIGYSGCKTCTSGTTCQYSNDYYSQCL).

It belongs to the glycosyl hydrolase 7 (cellulase C) family. Post-translationally, asn-204 contains mainly a high-mannose-type glycan (Hex(7-9)GlcNAc(2)), with a small fraction (8%) bearing a single GlcNAc at this site.

The protein resides in the secreted. It catalyses the reaction Endohydrolysis of (1-&gt;4)-beta-D-glucosidic linkages in cellulose, lichenin and cereal beta-D-glucans.. Functionally, endoglucanase (EG) that cleaves the internal beta-1,4-glucosidic bonds in cellulose. The degradation of cellulose involves an interplay between different cellulolytic enzymes. Hydrolysis starts with EGs, which cut internal glycosidic linkages to reduce the polymerization degree of the substrate and creates new chain ends for exocellobiohydrolases (CBHs). The CBH release the disaccharide cellobiose from the non-reducing end of the cellulose polymer chain. Finally, beta-1,4-glucosidases hydrolyze the cellobiose and other short cello-oligosaccharides into glucose units. In Hypocrea jecorina (Trichoderma reesei), this protein is Endoglucanase EG-1 (egl1).